The primary structure comprises 577 residues: ATP-dependent zinc metalloprotease FtsH (577 aa).

Residues 1–3 are Cytoplasmic-facing; sequence MKK. A helical transmembrane segment spans residues 4-24; sequence LYWIILIAVVLACSGILMSLH. The Extracellular segment spans residues 25–98; the sequence is LSVTKEEMTY…IKVDNSDSYS (74 aa). The chain crosses the membrane as a helical span at residues 99 to 119; sequence ATKVIQIILIITVGTGVFLFI. Residues 120–577 are Cytoplasmic-facing; that stretch reads RTSGGKDKPL…IDRICLKEAV (458 aa). Residue 186 to 193 participates in ATP binding; that stretch reads GPPGTGKT. Zn(2+) is bound at residue His-409. The active site involves Glu-410. Residues His-413 and Asp-487 each coordinate Zn(2+).

The protein in the central section; belongs to the AAA ATPase family. In the C-terminal section; belongs to the peptidase M41 family. As to quaternary structure, homohexamer. Zn(2+) serves as cofactor.

It localises to the cell membrane. Acts as a processive, ATP-dependent zinc metallopeptidase for both cytoplasmic and membrane proteins. Plays a role in the quality control of integral membrane proteins. The sequence is that of ATP-dependent zinc metalloprotease FtsH from Lachnoclostridium phytofermentans (strain ATCC 700394 / DSM 18823 / ISDg) (Clostridium phytofermentans).